The chain runs to 330 residues: Ketol-acid reductoisomerase (NADP(+)) (330 aa).

Positions 3 to 184 (LPVYYDKDID…GGGRMGVLKT (182 aa)) constitute a KARI N-terminal Rossmann domain. NADP(+) is bound by residues 26 to 29 (YGAQ), serine 52, and serine 54. The active site involves histidine 109. Residue glycine 135 coordinates NADP(+). Residues 185–329 (SFKEECESDL…EILRAPFNHK (145 aa)) form the KARI C-terminal knotted domain. The Mg(2+) site is built by aspartate 193, glutamate 197, glutamate 229, and glutamate 233. Substrate is bound at residue serine 254.

Belongs to the ketol-acid reductoisomerase family. Mg(2+) serves as cofactor.

The catalysed reaction is (2R)-2,3-dihydroxy-3-methylbutanoate + NADP(+) = (2S)-2-acetolactate + NADPH + H(+). It catalyses the reaction (2R,3R)-2,3-dihydroxy-3-methylpentanoate + NADP(+) = (S)-2-ethyl-2-hydroxy-3-oxobutanoate + NADPH + H(+). Its pathway is amino-acid biosynthesis; L-isoleucine biosynthesis; L-isoleucine from 2-oxobutanoate: step 2/4. It functions in the pathway amino-acid biosynthesis; L-valine biosynthesis; L-valine from pyruvate: step 2/4. Involved in the biosynthesis of branched-chain amino acids (BCAA). Catalyzes an alkyl-migration followed by a ketol-acid reduction of (S)-2-acetolactate (S2AL) to yield (R)-2,3-dihydroxy-isovalerate. In the isomerase reaction, S2AL is rearranged via a Mg-dependent methyl migration to produce 3-hydroxy-3-methyl-2-ketobutyrate (HMKB). In the reductase reaction, this 2-ketoacid undergoes a metal-dependent reduction by NADPH to yield (R)-2,3-dihydroxy-isovalerate. This Helicobacter pylori (strain HPAG1) protein is Ketol-acid reductoisomerase (NADP(+)).